A 370-amino-acid chain; its full sequence is Protein-tyrosine sulfotransferase 1 (370 aa).

Topologically, residues 1–8 (MVGKLKQN) are cytoplasmic. The helical; Signal-anchor for type II membrane protein transmembrane segment at 9 to 25 (LLLACLVISSVTVFYLG) threads the bilayer. Residues 26-370 (QHAMECHHRI…KEKPQTEQVE (345 aa)) lie on the Lumenal side of the membrane. A glycan (N-linked (GlcNAc...) asparagine) is linked at asparagine 60. Residue 79–83 (RSGTT) coordinates 3'-phosphoadenylyl sulfate. Cysteine 97 and cysteine 157 are joined by a disulfide. The active-site Proton donor/acceptor is the glutamate 100. The segment at 102–106 (RVIPR) is interaction with peptide substrate. Residues arginine 184, serine 192, and arginine 196 each coordinate 3'-phosphoadenylyl sulfate. An intrachain disulfide couples cysteine 226 to cysteine 234. Residue tyrosine 239 participates in 3'-phosphoadenylyl sulfate binding. N-linked (GlcNAc...) asparagine glycosylation is present at asparagine 262. 3'-phosphoadenylyl sulfate contacts are provided by residues 286 to 295 (STDQVIKPVN) and lysine 301.

The protein belongs to the protein sulfotransferase family. Homodimer. Can also form heterodimers with TPST2. In terms of processing, N-glycosylated. As to expression, ubiquitous. Detected in heart, brain, lung, liver, spleen, kidney, skeletal muscle and testis.

It localises to the golgi apparatus membrane. It carries out the reaction L-tyrosyl-[protein] + 3'-phosphoadenylyl sulfate = O-sulfo-L-tyrosine-[protein] + adenosine 3',5'-bisphosphate + H(+). Functionally, catalyzes the O-sulfation of tyrosine residues within acidic motifs of polypeptides, using 3'-phosphoadenylyl sulfate (PAPS) as cosubstrate. The polypeptide is Protein-tyrosine sulfotransferase 1 (Tpst1) (Mus musculus (Mouse)).